We begin with the raw amino-acid sequence, 240 residues long: MADS-box transcription factor 27 (240 aa).

Residues 1–61 (MGRGKIVIRR…GRLYEYSSTS (61 aa)) form the MADS-box domain. The 91-residue stretch at 86–176 (LKFWQREAAS…YKKISLIRQE (91 aa)) folds into the K-box domain. Residues 220-231 (LPQHSDAEQSTA) show a composition bias toward polar residues. The segment at 220–240 (LPQHSDAEQSTAPKLGLQLNP) is disordered.

In terms of tissue distribution, ubiquitous.

It is found in the nucleus. Probable transcription factor. The protein is MADS-box transcription factor 27 (MADS27) of Oryza sativa subsp. japonica (Rice).